Consider the following 581-residue polypeptide: Ras-specific guanine nucleotide-releasing factor RalGPS1 (581 aa).

The segment at 1–31 (MYRRNGLPASVSITSRNTQDSSSSESLDGRS) is disordered. The 240-residue stretch at 49-288 (TPEEFASQIT…YSLSLKIEPG (240 aa)) folds into the Ras-GEF domain. Residues 320–339 (PDTSVVAHLPTPPPARHRKS) form a disordered region. The short motif at 329 to 332 (PTPP) is the PXXP element. The PH domain occupies 455 to 567 (SITIEGPLRR…WHRHLAEACR (113 aa)).

The protein resides in the cytoplasm. Its subcellular location is the cell membrane. Its function is as follows. Guanine nucleotide exchange factor. May be involved in cytoskeletal organization. This is Ras-specific guanine nucleotide-releasing factor RalGPS1 (ralgps1) from Danio rerio (Zebrafish).